A 307-amino-acid polypeptide reads, in one-letter code: Histone deacetylase HDT1 (307 aa).

Residues 98 to 112 (EDEMDLDSEDEDEEL) are compositionally biased toward acidic residues. The tract at residues 98–280 (EDEMDLDSED…KSGGSVPCKP (183 aa)) is disordered. Positions 119–132 (ENGKADEKKQKSQE) are enriched in basic and acidic residues. Over residues 151 to 197 (DDDSDEDETDDSDEDETDDSDEGLSSEEGDDDSSDEDDTSDDEEEDT) the composition is skewed to acidic residues. A compositionally biased stretch (basic and acidic residues) spans 198–211 (PTPKKPEVGKKRPA). Residues 265–277 (SPKSAPKSGGSVP) are compositionally biased toward low complexity. Residues 276-299 (VPCKPCSKSFISETALQAHSRAKM) form a C2H2-type; degenerate zinc finger.

The protein belongs to the histone deacetylase HD2 family. Multimer. Isolated as a trimer composed of 3 proteins of 39, 42 and 45 kDa, possibly a homotrimer with different phosphorylation status or a heterotrimer with HDT2 and/or HDT3. In terms of processing, the N-terminus is blocked. Phosphorylated. Required for enzyme activity.

The protein resides in the nucleus. It is found in the nucleolus. With respect to regulation, inhibited by 3-(4-Aroyl-1-methyl-1H-pyrrol-2-yl)-N-hydroxy-2-propenamides. 3-(1-methyl-4-phenylacetyl-1H-pyrrol-2-yl)-N-hydroxy-2-propenamide 1b and 3-[1-methyl-4-(3-phenyl-2-propenoyl)-1H-pyrrol-2-yl]-N-hydroxy-2-propenamide 1c are very potent inhibitors. Mediates the deacetylation of lysine residues on the N-terminal part of the core histones (H2A, H2B, H3 and H4). Histone deacetylation gives a tag for epigenetic repression and plays an important role in transcriptional regulation, cell cycle progression and developmental events. Able to deacetylate all 4 core histones. This Zea mays (Maize) protein is Histone deacetylase HDT1 (HDT1).